The following is a 158-amino-acid chain: Protein GLUTAMINE DUMPER 1 (158 aa).

Residues 1–36 (MRPLSVQSKFEDVATSTSVNHHGVTPQSPWHSPVPY) lie on the Extracellular side of the membrane. Residues 37 to 57 (LFGGLAAMLGLIAFALLILAC) traverse the membrane as a helical segment. Topologically, residues 58–158 (SYWRLSSSGE…DTGETTTTSH (101 aa)) are cytoplasmic. The segment at 65–85 (SGEEDGQNVDEEKESRSGDKA) is disordered. Residues 66–76 (GEEDGQNVDEE) show a composition bias toward acidic residues. Residues 96–100 (VIMAG) carry the VIMAG motif. Positions 126–158 (ISQEESVAKEEEKMREGEEEKVKDTGETTTTSH) are disordered. Residues 131–151 (SVAKEEEKMREGEEEKVKDTG) show a composition bias toward basic and acidic residues.

This sequence belongs to the GLUTAMINE DUMPER 1 (TC 9.B.60) family. As to quaternary structure, interacts with LOG2. Ubiquitinated by LOG2 (in vitro). As to expression, expressed in the vascular tissues and in hydathodes. Expressed in the phloem and xylem (at the protein level).

Its subcellular location is the cell membrane. In terms of biological role, probable subunit of an amino acid transporter involved in the regulation of the amino acid metabolism. Stimulates amino acid export by activating nonselective amino acid facilitators. Required the interaction with the RING-type E3 ubiquitin-protein ligase LOG2 to fulfill its function. Plays a role in the Gln export at hydathodes, at xylem parenchyma into xylem sap and from mesophyll into leaf apoplasm. Acts upstream genes involved in the salicylic acid (SA) pathway and in the geminivirus-host interaction. The sequence is that of Protein GLUTAMINE DUMPER 1 (GDU1) from Arabidopsis thaliana (Mouse-ear cress).